The sequence spans 182 residues: Large ribosomal subunit protein uL16 (182 aa).

The protein belongs to the universal ribosomal protein uL16 family.

The chain is Large ribosomal subunit protein uL16 from Pyrobaculum arsenaticum (strain DSM 13514 / JCM 11321 / PZ6).